The following is a 140-amino-acid chain: 3-hydroxyacyl-[acyl-carrier-protein] dehydratase FabZ (140 aa).

His-47 is an active-site residue.

Belongs to the thioester dehydratase family. FabZ subfamily.

The protein resides in the cytoplasm. It catalyses the reaction a (3R)-hydroxyacyl-[ACP] = a (2E)-enoyl-[ACP] + H2O. In terms of biological role, involved in unsaturated fatty acids biosynthesis. Catalyzes the dehydration of short chain beta-hydroxyacyl-ACPs and long chain saturated and unsaturated beta-hydroxyacyl-ACPs. This Streptococcus pneumoniae serotype 2 (strain D39 / NCTC 7466) protein is 3-hydroxyacyl-[acyl-carrier-protein] dehydratase FabZ.